We begin with the raw amino-acid sequence, 638 residues long: Plasma kallikrein (638 aa).

The N-terminal stretch at 1 to 19 (MILFNRVGYFVSLFATVSC) is a signal peptide. Apple domains lie at 21–104 (CMTQ…LKQC), 111–194 (CHRD…LKSC), 201–284 (CPMD…LLTC), and 292–375 (CHSK…LRLC). Intrachain disulfides connect cysteine 21-cysteine 104, cysteine 47-cysteine 77, cysteine 51-cysteine 57, cysteine 111-cysteine 194, cysteine 137-cysteine 166, cysteine 141-cysteine 147, cysteine 201-cysteine 284, cysteine 227-cysteine 256, cysteine 231-cysteine 237, cysteine 292-cysteine 375, cysteine 318-cysteine 347, cysteine 322-cysteine 328, cysteine 340-cysteine 345, cysteine 383-cysteine 503, cysteine 419-cysteine 435, cysteine 517-cysteine 584, cysteine 548-cysteine 563, and cysteine 574-cysteine 602. Residue asparagine 127 is glycosylated (N-linked (GlcNAc...) asparagine). N-linked (GlcNAc...) asparagine glycosylation is present at asparagine 215. N-linked (GlcNAc...) asparagine glycosylation occurs at asparagine 308. Positions 391–626 (IVGGTNASLG…YMDWILEKTQ (236 aa)) constitute a Peptidase S1 domain. The N-linked (GlcNAc...) asparagine glycan is linked to asparagine 396. Residues histidine 434 and aspartate 483 each act as charge relay system in the active site. Residue asparagine 494 is glycosylated (N-linked (GlcNAc...) asparagine). Serine 578 serves as the catalytic Charge relay system.

This sequence belongs to the peptidase S1 family. Plasma kallikrein subfamily. As to quaternary structure, forms a heterodimer with SERPINA5. The zymogen is activated by factor XIIa, which cleaves the molecule into a light chain, which contains the active site, and a heavy chain, which associates with HMW kininogen. These chains are linked by one or more disulfide bonds.

The protein localises to the secreted. The enzyme catalyses Cleaves selectively Arg-|-Xaa and Lys-|-Xaa bonds, including Lys-|-Arg and Arg-|-Ser bonds in (human) kininogen to release bradykinin.. Inhibited by SERPINA5. Functionally, the enzyme cleaves Lys-Arg and Arg-Ser bonds. It activates, in a reciprocal reaction, factor XII after its binding to a negatively charged surface. It also releases bradykinin from HMW kininogen and may also play a role in the renin-angiotensin system by converting prorenin into renin. In Mus musculus (Mouse), this protein is Plasma kallikrein (Klkb1).